A 177-amino-acid polypeptide reads, in one-letter code: Parathyroid hormone-related protein (177 aa).

The N-terminal stretch at 1–24 (MLRRLVQQWSVAVFLLSYSVPSCG) is a signal peptide. A propeptide spanning residues 25–34 (RSVEGPGRRL) is cleaved from the precursor. The important for receptor binding stretch occupies residues 57 to 68 (RFFLHHLIAEIH). Positions 74-177 (ATSEVSPNSK…PEPELDSRRH (104 aa)) are disordered. Over residues 76-90 (SEVSPNSKPAANTKN) the composition is skewed to polar residues. The Nuclear localization signal motif lies at 108-129 (TNKVEPYKEQPLKTPGKKKKGK). Over residues 109 to 118 (NKVEPYKEQP) the composition is skewed to basic and acidic residues. The segment covering 122-132 (PGKKKKGKPGK) has biased composition (basic residues).

The protein belongs to the parathyroid hormone family. PTHrP interacts with PTH1R (via N-terminal extracellular domain). Post-translationally, there are several secretory forms, including osteostatin, arising from endoproteolytic cleavage of the initial translation product. Each of these secretory forms is believed to have one or more of its own receptors that mediates the normal paracrine, autocrine and endocrine actions.

It localises to the secreted. The protein localises to the cytoplasm. The protein resides in the nucleus. In terms of biological role, neuroendocrine peptide which is a critical regulator of cellular and organ growth, development, migration, differentiation and survival and of epithelial calcium ion transport. Acts by binding to its receptor, PTH1R, activating G protein-coupled receptor signaling. Regulates endochondral bone development and epithelial-mesenchymal interactions during the formation of the mammary glands and teeth. Required for skeletal homeostasis. Promotes mammary mesenchyme differentiation and bud outgrowth by modulating mesenchymal cell responsiveness to BMPs. Up-regulates BMPR1A expression in the mammary mesenchyme and this increases the sensitivity of these cells to BMPs and allows them to respond to BMP4 in a paracrine and/or autocrine fashion. BMP4 signaling in the mesenchyme, in turn, triggers epithelial outgrowth and augments MSX2 expression, which causes the mammary mesenchyme to inhibit hair follicle formation within the nipple sheath. Potent inhibitor of osteoclastic bone resorption. The chain is Parathyroid hormone-related protein (PTHLH) from Oryctolagus cuniculus (Rabbit).